We begin with the raw amino-acid sequence, 872 residues long: Alanine--tRNA ligase (872 aa).

Zn(2+) contacts are provided by H567, H571, C669, and H673.

Belongs to the class-II aminoacyl-tRNA synthetase family. Zn(2+) is required as a cofactor.

Its subcellular location is the cytoplasm. It catalyses the reaction tRNA(Ala) + L-alanine + ATP = L-alanyl-tRNA(Ala) + AMP + diphosphate. Functionally, catalyzes the attachment of alanine to tRNA(Ala) in a two-step reaction: alanine is first activated by ATP to form Ala-AMP and then transferred to the acceptor end of tRNA(Ala). Also edits incorrectly charged Ser-tRNA(Ala) and Gly-tRNA(Ala) via its editing domain. The protein is Alanine--tRNA ligase of Streptococcus pyogenes serotype M5 (strain Manfredo).